Here is a 1793-residue protein sequence, read N- to C-terminus: Protein TIC 214 (1793 aa).

6 consecutive transmembrane segments (helical) span residues 11-31, 64-84, 90-112, 129-149, 172-192, and 222-242; these read LVSL…YYGF, FITG…HIAL, ITVI…NFLN, IFFQ…SSIL, VGWL…LVWI, and IFLI…PPIY. Residues 1504 to 1524 are disordered; the sequence is DIEEDYGESDSKKGGKDKNKK.

The protein belongs to the TIC214 family. As to quaternary structure, part of the Tic complex.

Its subcellular location is the plastid. It is found in the chloroplast inner membrane. In terms of biological role, involved in protein precursor import into chloroplasts. May be part of an intermediate translocation complex acting as a protein-conducting channel at the inner envelope. The protein is Protein TIC 214 of Lotus japonicus (Lotus corniculatus var. japonicus).